Here is a 559-residue protein sequence, read N- to C-terminus: MFPFGPHSPGGDGSAGAGAEEPTPHEGQAAATGPPSPLHPGADATHPPPPARSPRRPGAPSLSPAPRSGELGLPGAPESSTASAPGEPSPPSPPCRRPGPDCRAKSRGRHGLGAGLGGPGARLFGWLKERSLGRGLFVDPARDNFRTMTSLYGSIHPADSVYLSTRTHGAVFNLEYSPDGSVLTVACEQTEVLLFDPISSKHIKTLSEAHEDCVNNIRFLDNRLFATCSDDTTIALWDLRKLNTKVCTLHGHTSWVKNIEYDTNTRLLVTSGFDGNVIIWDTNRYTEDGCPHKKFFHTRFLMRMRLTPDCSKMLISTSSGYLLILHDLDLTKSLEVGSYPILRARRTTSSSDLTTSSSSSGPRVSGSPCHHSDSNSSEKHMSRASQREGVSPRNSLEVVTPEVLGESDHGNCITSLQLHPKGWATLLRCSSNSDDEECTCVYEFQEGAPVRPVSPRCSLRLTHYIEEANVGRGYIKELCFSPDGRMISSPHGYGIRLLGFDKQCSELVDCLPKEASPLRVIRSLYSHNDVVLTTKFSPTHCQIASGCLSGRVSLYQPKF.

Residues 1–119 are disordered; that stretch reads MFPFGPHSPG…HGLGAGLGGP (119 aa). Phosphoserine occurs at positions 53, 63, 89, and 92. Low complexity predominate over residues 56 to 86; it reads RPGAPSLSPAPRSGELGLPGAPESSTASAPG. Pro residues predominate over residues 87–97; it reads EPSPPSPPCRR. Arg-134 is subject to Omega-N-methylarginine. WD repeat units follow at residues 166–205, 209–247, 251–290, and 296–335; these read RTHG…HIKT, AHED…TKVC, GHTS…EDGC, and FHTR…KSLE. At Ser-349 the chain carries Phosphoserine. Residues 350-367 show a composition bias toward low complexity; it reads SSDLTTSSSSSGPRVSGS. Positions 350-396 are disordered; that stretch reads SSDLTTSSSSSGPRVSGSPCHHSDSNSSEKHMSRASQREGVSPRNSL. The segment covering 370–381 has biased composition (basic and acidic residues); that stretch reads HHSDSNSSEKHM. WD repeat units lie at residues 408 to 448, 470 to 508, and 526 to 559; these read DHGN…QEGA, VGRG…SELV, and SHND…QPKF.

The protein belongs to the WD repeat DCAF10 family. In terms of assembly, interacts with DDB1.

It participates in protein modification; protein ubiquitination. May function as a substrate receptor for CUL4-DDB1 E3 ubiquitin-protein ligase complex. This chain is DDB1- and CUL4-associated factor 10 (DCAF10), found in Homo sapiens (Human).